The primary structure comprises 504 residues: ATP synthase subunit alpha (504 aa).

Position 169–176 (169–176) interacts with ATP; it reads GDRQTGKT.

This sequence belongs to the ATPase alpha/beta chains family. F-type ATPases have 2 components, CF(1) - the catalytic core - and CF(0) - the membrane proton channel. CF(1) has five subunits: alpha(3), beta(3), gamma(1), delta(1), epsilon(1). CF(0) has three main subunits: a(1), b(2) and c(9-12). The alpha and beta chains form an alternating ring which encloses part of the gamma chain. CF(1) is attached to CF(0) by a central stalk formed by the gamma and epsilon chains, while a peripheral stalk is formed by the delta and b chains.

It localises to the cell membrane. It carries out the reaction ATP + H2O + 4 H(+)(in) = ADP + phosphate + 5 H(+)(out). Produces ATP from ADP in the presence of a proton gradient across the membrane. The alpha chain is a regulatory subunit. The polypeptide is ATP synthase subunit alpha (Clostridium botulinum (strain Eklund 17B / Type B)).